The sequence spans 523 residues: MQRLIPIAFSSSVKGFVRRHYLLLERGNNPETSLSRSFSGASHHHHYRERLRNELHCIKFDDAFSLFCEMLQSRPIPSIVDFTRVLTVIAKMNKFDIVIYLYHKMENLGISHDLYSFTILIHCFCRCSRLSLALALLGKMMKLGFRPSIVTLGSLLNGFCQGNRFQEAVSLVDSMDGFGFVPNVVIYNTVINGLCKNRDLNNALEVFYCMEKKGIRADAVTYNTLISGLSNSGRWTDAARLLRDMVKRKIDPNVIFFTALIDTFVKEGNLLEARNLYKEMIRRSVVPNVFTYNSLINGFCIHGCLGDAKYMFDLMVSKGCFPDVVTYNTLITGFCKSKRVEDGMKLFCEMTYQGLVGDAFTYNTLIHGYCQAGKLNVAQKVFNRMVDCGVSPDIVTYNILLDCLCNNGKIEKALVMVEDLQKSEMDVDIITYNIIIQGLCRTDKLKEAWCLFRSLTRKGVKPDAIAYITMISGLCRKGLQREADKLCRRMKEDGFMPSERIYDETLRDHYTSLSAELIKAAHE.

PPR repeat units follow at residues 43-77 (HHHH…RPIP), 78-112 (SIVD…GISH), 113-147 (DLYS…GFRP), 148-182 (SIVT…GFVP), 183-217 (NVVI…GIRA), 218-252 (DAVT…KIDP), 253-287 (NVIF…SVVP), 288-322 (NVFT…GCFP), 323-357 (DVVT…GLVG), 358-392 (DAFT…GVSP), 393-427 (DIVT…EMDV), 428-462 (DIIT…GVKP), and 463-497 (DAIA…GFMP).

It belongs to the PPR family. P subfamily.

The sequence is that of Pentatricopeptide repeat-containing protein At1g64580 from Arabidopsis thaliana (Mouse-ear cress).